We begin with the raw amino-acid sequence, 868 residues long: Probable inorganic carbon transporter subunit DabA (868 aa).

The Zn(2+) site is built by C392, D394, H574, and C589.

The protein belongs to the inorganic carbon transporter (TC 9.A.2) DabA family. Forms a complex with DabB. It depends on Zn(2+) as a cofactor.

It is found in the cell membrane. In terms of biological role, part of an energy-coupled inorganic carbon pump. This is Probable inorganic carbon transporter subunit DabA from Bacillus cereus (strain G9842).